A 542-amino-acid polypeptide reads, in one-letter code: Chaperonin GroEL 5 (542 aa).

Residues threonine 30 to proline 33, lysine 51, aspartate 87 to threonine 91, glycine 415, and aspartate 496 contribute to the ATP site.

The protein belongs to the chaperonin (HSP60) family. As to quaternary structure, forms a cylinder of 14 subunits composed of two heptameric rings stacked back-to-back. Interacts with the co-chaperonin GroES.

It localises to the cytoplasm. The enzyme catalyses ATP + H2O + a folded polypeptide = ADP + phosphate + an unfolded polypeptide.. Together with its co-chaperonin GroES, plays an essential role in assisting protein folding. The GroEL-GroES system forms a nano-cage that allows encapsulation of the non-native substrate proteins and provides a physical environment optimized to promote and accelerate protein folding. In Rhizobium meliloti (strain 1021) (Ensifer meliloti), this protein is Chaperonin GroEL 5.